The following is a 294-amino-acid chain: UPF0761 membrane protein YPTS_0028 (294 aa).

Helical transmembrane passes span 44 to 64 (LLSL…FPMF), 67 to 87 (ISIK…GDII), 108 to 128 (GLIV…NIIW), 136 to 156 (LVFS…LVGA), 185 to 205 (VFPL…VPTV), 212 to 232 (ALIG…GFAM), and 246 to 266 (VLAV…IVLL).

Belongs to the UPF0761 family.

The protein resides in the cell inner membrane. In Yersinia pseudotuberculosis serotype IB (strain PB1/+), this protein is UPF0761 membrane protein YPTS_0028.